A 124-amino-acid chain; its full sequence is Cytochrome c2 (124 aa).

A Pyrrolidone carboxylic acid modification is found at Gln-1. Residues Cys-15, Cys-18, His-19, and Met-100 each contribute to the heme c site.

Post-translationally, binds 1 heme c group covalently per subunit.

The protein localises to the periplasm. Cytochrome c2 is found mainly in purple, non-sulfur, photosynthetic bacteria where it functions as the electron donor to the oxidized bacteriochlorophyll in the photophosphorylation pathway. However, it may also have a role in the respiratory chain and is found in some non-photosynthetic bacteria. This chain is Cytochrome c2 (cycA), found in Cereibacter sphaeroides (Rhodobacter sphaeroides).